The sequence spans 295 residues: uncharacterized protein (295 aa).

The 230-residue stretch at 4–233 (IVVKSMAMEK…LQNTIERLVL (230 aa)) folds into the Sigma-54 factor interaction domain.

This is an uncharacterized protein from Pseudomonas sp. (strain NS671).